The following is a 291-amino-acid chain: Nucleotide-binding protein LJ_0866 (291 aa).

G13 to T20 provides a ligand contact to ATP. D63–V66 is a binding site for GTP.

It belongs to the RapZ-like family.

Displays ATPase and GTPase activities. This Lactobacillus johnsonii (strain CNCM I-12250 / La1 / NCC 533) protein is Nucleotide-binding protein LJ_0866.